We begin with the raw amino-acid sequence, 508 residues long: Steroid 17-alpha-hydroxylase/17,20 lyase (508 aa).

Asparagine 202 contributes to the substrate binding site. Residue cysteine 442 coordinates heme.

This sequence belongs to the cytochrome P450 family. The cofactor is heme.

Its subcellular location is the endoplasmic reticulum membrane. It is found in the microsome membrane. The enzyme catalyses a C21-steroid + reduced [NADPH--hemoprotein reductase] + O2 = a 17alpha-hydroxy-C21-steroid + oxidized [NADPH--hemoprotein reductase] + H2O + H(+). It carries out the reaction progesterone + reduced [NADPH--hemoprotein reductase] + O2 = 17alpha-hydroxyprogesterone + oxidized [NADPH--hemoprotein reductase] + H2O + H(+). It catalyses the reaction pregnenolone + reduced [NADPH--hemoprotein reductase] + O2 = 17alpha-hydroxypregnenolone + oxidized [NADPH--hemoprotein reductase] + H2O + H(+). The catalysed reaction is 17alpha-hydroxypregnenolone + reduced [NADPH--hemoprotein reductase] + O2 = 3beta-hydroxyandrost-5-en-17-one + acetate + oxidized [NADPH--hemoprotein reductase] + H2O + 2 H(+). Its pathway is steroid hormone biosynthesis. It participates in steroid biosynthesis; glucocorticoid biosynthesis. Regulated predominantly by intracellular cAMP levels. The 17,20-lyase activity is stimulated by cytochrome b5, which acts as an allosteric effector increasing the Vmax of the lyase activity. A cytochrome P450 monooxygenase involved in corticoid and androgen biosynthesis. Catalyzes 17-alpha hydroxylation of C21 steroids, which is common for both pathways. A second oxidative step, required only for androgen synthesis, involves an acyl-carbon cleavage. Hydroxylates pregnenolone to form 17-alpha pregnenolone, followed by the cleavage of the C17-C20 bond to form dehydroepiandrosterone (DHEA). Has 17-alpha hydroxylase activity toward progesterone. The 17-alpha hydroxy intermediates, as part of adrenal glucocorticoids biosynthesis pathway, are precursors of cortisol. Mechanistically, uses molecular oxygen inserting one oxygen atom into a substrate, and reducing the second into a water molecule, with two electrons provided by NADPH via cytochrome P450 reductase (CPR; NADPH-ferrihemoprotein reductase). This Papio hamadryas ursinus (Chacma baboon) protein is Steroid 17-alpha-hydroxylase/17,20 lyase (CYP17A1).